The chain runs to 195 residues: Rac-like GTP-binding protein ARAC4 (195 aa).

GTP is bound by residues 12-19, 30-37, 59-63, and 117-120; these read GDGAVGKT, FPTDYVPT, DTAGQ, and TKLD. The Effector region motif lies at 34–42; that stretch reads YVPTVFDNF. Residue C192 is modified to Cysteine methyl ester. Residue C192 is the site of S-geranylgeranyl cysteine attachment. The propeptide at 193–195 is removed in mature form; it reads AFL.

Belongs to the small GTPase superfamily. Rho family. As to quaternary structure, interacts with SPK1, ICR1, ICR5 and PIR. In terms of tissue distribution, ubiquitous.

It is found in the cytoplasm. The protein localises to the cell membrane. Functionally, inactive GDP-bound Rho GTPases reside in the cytosol, are found in a complex with Rho GDP-dissociation inhibitors (Rho GDIs), and are released from the GDI protein in order to translocate to membranes upon activation. Involved in cell polarity control during the actin-dependent tip growth of root hairs, thus regulating root hair length and root hair initiation. Contributes, in a SPK1-dependent manner, to the prevention of cortical microtubules organization into parallel arrays oriented perpendicular to the axis of cell elongation to limit anisotropic cell growth during petal development. May regulate a WAVE complex that activates the Arp2/3 complex. This Arabidopsis thaliana (Mouse-ear cress) protein is Rac-like GTP-binding protein ARAC4.